The sequence spans 805 residues: Na(+)/H(+) antiporter subunit A1 (805 aa).

20 consecutive transmembrane segments (helical) span residues 1 to 21 (MSLL…IPFV), 30 to 50 (LGWF…SYIS), 79 to 99 (LGLL…LYSI), 117 to 137 (LFMG…LYLF), 166 to 186 (MLVT…LSIA), 201 to 221 (EIQT…GAMT), 226 to 246 (FPFY…SAYL), 265 to 285 (IFAV…ITLF), 300 to 320 (ILAF…GVGA), 337 to 357 (FTAA…LFMI), 377 to 397 (LTIM…MAGI), 427 to 447 (LGIL…VYSI), 480 to 500 (ILAI…GSII), 531 to 551 (LGIY…IYLL), 591 to 611 (LVII…VTPF), 623 to 643 (PFEL…IFAK), 646 to 666 (LFSI…FIFF), 671 to 691 (LALT…LCFY), 707 to 727 (LVNI…GLIA), and 766 to 786 (TLFE…MIKL).

Belongs to the CPA3 antiporters (TC 2.A.63) subunit A family. As to quaternary structure, may form a heterooligomeric complex that consists of seven subunits: mnhA1, mnhB1, mnhC1, mnhD1, mnhE1, mnhF1 and mnhG1.

The protein localises to the cell membrane. Functionally, mnh complex is a Na(+)/H(+) antiporter involved in Na(+) excretion. The protein is Na(+)/H(+) antiporter subunit A1 (mnhA1) of Staphylococcus saprophyticus subsp. saprophyticus (strain ATCC 15305 / DSM 20229 / NCIMB 8711 / NCTC 7292 / S-41).